A 554-amino-acid chain; its full sequence is Estrogen receptor beta (554 aa).

The segment at 25-173 (TEIKNSPAGV…NPGSKKDAHF (149 aa)) is modulating. NR C4-type zinc fingers lie at residues 174–194 (CAVC…CEGC) and 210–234 (CPAT…LRKC). A DNA-binding region (nuclear receptor) is located at residues 174 to 239 (CAVCSDYASG…RLRKCYEVGM (66 aa)). Residues 289 to 521 (SPEQFVLTLL…DLLLEMLNAH (233 aa)) enclose the NR LBD domain. The tract at residues 529–554 (PLATHPEFGPLEQMEPGESLRKGEPQ) is disordered.

This sequence belongs to the nuclear hormone receptor family. NR3 subfamily. Binds DNA as a homodimer. Can form a heterodimer with ER-alpha. As to expression, brain, pituitary, skeletal muscle, liver, adrenal, kidney, intestine and ovary.

The protein resides in the nucleus. Its function is as follows. Binds estrogens with an affinity similar to that of ER-alpha, and activates expression of reporter genes containing estrogen response elements (ERE) in an estrogen-dependent manner. Locally synthesized estrogens may act via ER beta, in addition to ER alpha, to mediate seasonal or developmental effects on nearby song nuclei. The protein is Estrogen receptor beta (ESR2) of Sturnus vulgaris (Starling).